Consider the following 354-residue polypeptide: Holliday junction branch migration complex subunit RuvB (354 aa).

The disordered stretch occupies residues 1–38; it reads MSDFERTEFELPPGVGHSQNEDLNPQQTAGDSDIDTSL. A large ATPase domain (RuvB-L) region spans residues 2–199; that stretch reads SDFERTEFEL…FGFTAQMEFY (198 aa). Polar residues predominate over residues 17–30; that stretch reads HSQNEDLNPQQTAG. ATP is bound by residues Leu-38, Arg-39, Gly-80, Lys-83, Thr-84, Thr-85, 146–148, Arg-189, Tyr-199, and Arg-236; that span reads EDF. Residue Thr-84 participates in Mg(2+) binding. The tract at residues 200-270 is small ATPAse domain (RuvB-S); it reads DTADLTRVVT…VARAALLVFD (71 aa). Positions 273 to 354 are head domain (RuvB-H); that stretch reads ESGLDRLDRA…LEPPEGTIGL (82 aa). DNA-binding residues include Arg-328 and Arg-333.

It belongs to the RuvB family. As to quaternary structure, homohexamer. Forms an RuvA(8)-RuvB(12)-Holliday junction (HJ) complex. HJ DNA is sandwiched between 2 RuvA tetramers; dsDNA enters through RuvA and exits via RuvB. An RuvB hexamer assembles on each DNA strand where it exits the tetramer. Each RuvB hexamer is contacted by two RuvA subunits (via domain III) on 2 adjacent RuvB subunits; this complex drives branch migration. In the full resolvosome a probable DNA-RuvA(4)-RuvB(12)-RuvC(2) complex forms which resolves the HJ.

It localises to the cytoplasm. The catalysed reaction is ATP + H2O = ADP + phosphate + H(+). The RuvA-RuvB-RuvC complex processes Holliday junction (HJ) DNA during genetic recombination and DNA repair, while the RuvA-RuvB complex plays an important role in the rescue of blocked DNA replication forks via replication fork reversal (RFR). RuvA specifically binds to HJ cruciform DNA, conferring on it an open structure. The RuvB hexamer acts as an ATP-dependent pump, pulling dsDNA into and through the RuvAB complex. RuvB forms 2 homohexamers on either side of HJ DNA bound by 1 or 2 RuvA tetramers; 4 subunits per hexamer contact DNA at a time. Coordinated motions by a converter formed by DNA-disengaged RuvB subunits stimulates ATP hydrolysis and nucleotide exchange. Immobilization of the converter enables RuvB to convert the ATP-contained energy into a lever motion, pulling 2 nucleotides of DNA out of the RuvA tetramer per ATP hydrolyzed, thus driving DNA branch migration. The RuvB motors rotate together with the DNA substrate, which together with the progressing nucleotide cycle form the mechanistic basis for DNA recombination by continuous HJ branch migration. Branch migration allows RuvC to scan DNA until it finds its consensus sequence, where it cleaves and resolves cruciform DNA. The sequence is that of Holliday junction branch migration complex subunit RuvB from Corynebacterium jeikeium (strain K411).